The sequence spans 692 residues: Non-hemolytic phospholipase C (692 aa).

Positions 1-35 (MISKSRRSFIRLAAGTVGATVATSMLPSSIQAALA) form a signal peptide, tat-type signal.

Belongs to the bacterial phospholipase C family. In terms of processing, predicted to be exported by the Tat system. The position of the signal peptide cleavage has not been experimentally proven.

It carries out the reaction a 1,2-diacyl-sn-glycero-3-phosphocholine + H2O = phosphocholine + a 1,2-diacyl-sn-glycerol + H(+). Hydrolyzes phosphatidylserine as well as phosphatidylcholine. In Pseudomonas aeruginosa (strain ATCC 15692 / DSM 22644 / CIP 104116 / JCM 14847 / LMG 12228 / 1C / PRS 101 / PAO1), this protein is Non-hemolytic phospholipase C (plcN).